An 80-amino-acid chain; its full sequence is Lantibiotic Flvalpha.c (80 aa).

A propeptide spans 1 to 38 (MNKNPIYRSEEEAKNIACGNVAAELDENSQALDAINGA) (cleaved by FlvT). 2,3-didehydrobutyrine; by FlvM1 is present on residues Thr-43 and Thr-47. The segment at residues 52 to 55 (TLGC) is a cross-link (beta-methyllanthionine (Thr-Cys); by FlvM1). The lanthionine (Ser-Cys); by FlvM1 cross-link spans 58–68 (SYGLGNGGYCC). 2 cross-links (beta-methyllanthionine (Thr-Cys); by FlvM1) span residues 69–74 (TYTVEC) and 71–78 (TVECSKTC).

Post-translationally, the lanthionine formed by Ser-58 and Cys-68 forms a putative lipid II binding motif. In terms of processing, maturation of FlvA1 peptides involves the enzymatic conversion of Thr, and Ser into dehydrated AA and the formation of thioether bonds with cysteines. Modifications are processed by the flavecin synthetase FlvM1. This is followed by membrane translocation and cleavage of the modified precursor. Contains DL-lanthionine and DL-beta-methyllanthionine, when coepressed in E.coli with the flavecin synthetase FlvM1.

The protein resides in the secreted. Its function is as follows. Lanthionine-containing peptide antibiotic (lantibiotic) only active on Gram-positive bacteria in synergy with Flvbeta peptides, which are encoded by the same operon than Flvalpha.a. Shows antibacterial activity in synergy with Flvbeta.b, Flvbeta.c, Flvbeta.e and Flvbeta.g. Does not show antibacterial activity when tested with Flvbeta.a, Flvbeta.d, Flvbeta.f and Flvbeta.h. The bactericidal activity of lantibiotics is based on depolarization of energized bacterial cytoplasmic membranes, initiated by the formation of aqueous transmembrane pores. The protein is Lantibiotic Flvalpha.c of Ruminococcus flavefaciens.